Consider the following 255-residue polypeptide: MLRVENLHVRRGGKDVLAGIDLQLLPGEVLGVLGPNGAGKSSLLGGLSGELAAHQGQVLLDDQELAHWSGAERAQRLAVLPQASSLDFAFRVEEVVALGRLPHQTGRVRDEEIVNAALNAADVAHLSGRSYLALSGGERQRVHLARVLAQLWPGQPGHNLLLDEPTSALDPLHQHVTLQAIRAFADRGAAVLVILHDLNLAARYCDRVLLLEGGRPHSLGTPTAVLRPEPLKAVFGLEVLVQEHPERGHPLIIAR.

Positions 2–238 constitute an ABC transporter domain; it reads LRVENLHVRR…EPLKAVFGLE (237 aa). 34–41 lines the ATP pocket; sequence GPNGAGKS.

It belongs to the ABC transporter superfamily. Heme (hemin) importer (TC 3.A.1.14.5) family. In terms of assembly, the complex is composed of two ATP-binding proteins (HmuV), two transmembrane proteins (HmuU) and a solute-binding protein (HmuT).

It localises to the cell inner membrane. Its function is as follows. Part of the ABC transporter complex HmuTUV involved in hemin import. Responsible for energy coupling to the transport system. In Pseudomonas fluorescens (strain ATCC BAA-477 / NRRL B-23932 / Pf-5), this protein is Hemin import ATP-binding protein HmuV.